The primary structure comprises 441 residues: Tol-Pal system protein TolB (441 aa).

The signal sequence occupies residues 1-39; it reads MPTMTPAFSRASLSEALRSYGLALLLFLATLLAWQPAHA.

It belongs to the TolB family. The Tol-Pal system is composed of five core proteins: the inner membrane proteins TolA, TolQ and TolR, the periplasmic protein TolB and the outer membrane protein Pal. They form a network linking the inner and outer membranes and the peptidoglycan layer.

It localises to the periplasm. Functionally, part of the Tol-Pal system, which plays a role in outer membrane invagination during cell division and is important for maintaining outer membrane integrity. The chain is Tol-Pal system protein TolB from Bordetella avium (strain 197N).